Here is a 90-residue protein sequence, read N- to C-terminus: Large ribosomal subunit protein bL27 (90 aa).

Residues 1–22 (MAHKKSGGSSSNGRDSAGRRLG) form a disordered region.

The protein belongs to the bacterial ribosomal protein bL27 family.

In Caulobacter sp. (strain K31), this protein is Large ribosomal subunit protein bL27.